A 196-amino-acid polypeptide reads, in one-letter code: Imidazoleglycerol-phosphate dehydratase (196 aa).

The protein belongs to the imidazoleglycerol-phosphate dehydratase family.

It localises to the cytoplasm. The catalysed reaction is D-erythro-1-(imidazol-4-yl)glycerol 3-phosphate = 3-(imidazol-4-yl)-2-oxopropyl phosphate + H2O. It functions in the pathway amino-acid biosynthesis; L-histidine biosynthesis; L-histidine from 5-phospho-alpha-D-ribose 1-diphosphate: step 6/9. This is Imidazoleglycerol-phosphate dehydratase from Phenylobacterium zucineum (strain HLK1).